We begin with the raw amino-acid sequence, 143 residues long: Nucleoside diphosphate kinase (143 aa).

Lysine 11, phenylalanine 59, arginine 87, threonine 93, arginine 104, and asparagine 114 together coordinate ATP. Residue histidine 117 is the Pros-phosphohistidine intermediate of the active site.

Belongs to the NDK family. In terms of assembly, homotetramer. The cofactor is Mg(2+).

It is found in the cytoplasm. It catalyses the reaction a 2'-deoxyribonucleoside 5'-diphosphate + ATP = a 2'-deoxyribonucleoside 5'-triphosphate + ADP. The catalysed reaction is a ribonucleoside 5'-diphosphate + ATP = a ribonucleoside 5'-triphosphate + ADP. Major role in the synthesis of nucleoside triphosphates other than ATP. The ATP gamma phosphate is transferred to the NDP beta phosphate via a ping-pong mechanism, using a phosphorylated active-site intermediate. This is Nucleoside diphosphate kinase from Alteromonas mediterranea (strain DSM 17117 / CIP 110805 / LMG 28347 / Deep ecotype).